The primary structure comprises 180 residues: Major urinary protein 6 (180 aa).

The N-terminal stretch at 1-18 (MKMLLLLCLGLTLVCVHA) is a signal peptide. Residues cysteine 82 and cysteine 175 are joined by a disulfide bond.

It belongs to the calycin superfamily. Lipocalin family. As to expression, abundant in the urine of adult male mice but absent from that of females.

The protein localises to the secreted. Its function is as follows. Binds pheromones that are released from drying urine of males. These pheromones affect the sexual behavior of females. This Mus musculus (Mouse) protein is Major urinary protein 6 (Mup6).